Consider the following 697-residue polypeptide: Elongation factor G (697 aa).

Residues 8–290 (ERYRNIGIMA…AVLSYMPSPV (283 aa)) form the tr-type G domain. GTP is bound by residues 17 to 24 (AHIDAGKT), 88 to 92 (DTPGH), and 142 to 145 (NKMD).

This sequence belongs to the TRAFAC class translation factor GTPase superfamily. Classic translation factor GTPase family. EF-G/EF-2 subfamily.

Its subcellular location is the cytoplasm. Catalyzes the GTP-dependent ribosomal translocation step during translation elongation. During this step, the ribosome changes from the pre-translocational (PRE) to the post-translocational (POST) state as the newly formed A-site-bound peptidyl-tRNA and P-site-bound deacylated tRNA move to the P and E sites, respectively. Catalyzes the coordinated movement of the two tRNA molecules, the mRNA and conformational changes in the ribosome. This is Elongation factor G from Nitrosococcus oceani (strain ATCC 19707 / BCRC 17464 / JCM 30415 / NCIMB 11848 / C-107).